We begin with the raw amino-acid sequence, 440 residues long: UDP-N-acetylmuramoylalanine--D-glutamate ligase (440 aa).

Residue 113-119 (GTNGKST) coordinates ATP.

The protein belongs to the MurCDEF family.

Its subcellular location is the cytoplasm. The enzyme catalyses UDP-N-acetyl-alpha-D-muramoyl-L-alanine + D-glutamate + ATP = UDP-N-acetyl-alpha-D-muramoyl-L-alanyl-D-glutamate + ADP + phosphate + H(+). It participates in cell wall biogenesis; peptidoglycan biosynthesis. Cell wall formation. Catalyzes the addition of glutamate to the nucleotide precursor UDP-N-acetylmuramoyl-L-alanine (UMA). The polypeptide is UDP-N-acetylmuramoylalanine--D-glutamate ligase (Buchnera aphidicola subsp. Acyrthosiphon pisum (strain Tuc7)).